Reading from the N-terminus, the 311-residue chain is Formyltransferase/hydrolase complex subunit D (311 aa).

Belongs to the FTR family. As to quaternary structure, homotetramer. Octaheteromer. Part of the formyltransferase/hydrolase complex fhc; composed of FhcA, FhcB, FhcC and FhcD.

The protein localises to the cytoplasm. The enzyme catalyses N-formylmethanofuran + 5,6,7,8-tetrahydromethanopterin + H(+) = N(5)-formyl-5,6,7,8-tetrahydromethanopterin + methanofuran. The protein operates within one-carbon metabolism; formaldehyde degradation; formate from formaldehyde (H(4)MPT route): step 4/5. In terms of biological role, involved in the transformation of 5-formyl tetrahydromethanopterin (5-formyl-H(4)MPT) to methanofuran (MFR) and formate via the intermediate formylmethanofuran (formyl-MFR). Catalyzes the transfer of a formyl group from 5-formyl-H(4)MPT to MFR to produce tetrahydromethanopterin (H(4)MPT) and formyl-MFR, which is then hydrolyzed to formate and MFR. The protein is Formyltransferase/hydrolase complex subunit D of Methylorubrum extorquens (strain ATCC 14718 / DSM 1338 / JCM 2805 / NCIMB 9133 / AM1) (Methylobacterium extorquens).